The following is a 465-amino-acid chain: GTPase Der (465 aa).

2 EngA-type G domains span residues 3-167 and 179-352; these read PLVA…PEEG and VRIA…ASAT. GTP contacts are provided by residues 9 to 16, 57 to 61, 119 to 122, 185 to 192, 232 to 236, and 297 to 300; these read GRPNVGKS, DTGGI, NKID, DTAGL, and NKWD. The KH-like domain maps to 353–437; the sequence is HEFSTSEVNQ…PVCFIFREGA (85 aa).

The protein belongs to the TRAFAC class TrmE-Era-EngA-EngB-Septin-like GTPase superfamily. EngA (Der) GTPase family. As to quaternary structure, associates with the 50S ribosomal subunit.

Its function is as follows. GTPase that plays an essential role in the late steps of ribosome biogenesis. The sequence is that of GTPase Der from Xanthomonas oryzae pv. oryzae (strain MAFF 311018).